The primary structure comprises 450 residues: Glutamate--tRNA ligase 1 (450 aa).

Residues 7 to 17 (PSPTGYMHVGN) carry the 'HIGH' region motif. The short motif at 236 to 240 (KISKR) is the 'KMSKS' region element. Residue lysine 239 participates in ATP binding.

It belongs to the class-I aminoacyl-tRNA synthetase family. Glutamate--tRNA ligase type 1 subfamily. In terms of assembly, monomer.

It is found in the cytoplasm. It catalyses the reaction tRNA(Glu) + L-glutamate + ATP = L-glutamyl-tRNA(Glu) + AMP + diphosphate. In terms of biological role, catalyzes the attachment of glutamate to tRNA(Glu) in a two-step reaction: glutamate is first activated by ATP to form Glu-AMP and then transferred to the acceptor end of tRNA(Glu). In Anaplasma phagocytophilum (strain HZ), this protein is Glutamate--tRNA ligase 1.